Here is a 175-residue protein sequence, read N- to C-terminus: 3-hydroxydecanoyl-[acyl-carrier-protein] dehydratase (175 aa).

H74 is a catalytic residue.

Belongs to the thioester dehydratase family. FabA subfamily. As to quaternary structure, homodimer.

It localises to the cytoplasm. It carries out the reaction a (3R)-hydroxyacyl-[ACP] = a (2E)-enoyl-[ACP] + H2O. The catalysed reaction is (3R)-hydroxydecanoyl-[ACP] = (2E)-decenoyl-[ACP] + H2O. The enzyme catalyses (2E)-decenoyl-[ACP] = (3Z)-decenoyl-[ACP]. It functions in the pathway lipid metabolism; fatty acid biosynthesis. Necessary for the introduction of cis unsaturation into fatty acids. Catalyzes the dehydration of (3R)-3-hydroxydecanoyl-ACP to E-(2)-decenoyl-ACP and then its isomerization to Z-(3)-decenoyl-ACP. Can catalyze the dehydratase reaction for beta-hydroxyacyl-ACPs with saturated chain lengths up to 16:0, being most active on intermediate chain length. In Alcanivorax borkumensis (strain ATCC 700651 / DSM 11573 / NCIMB 13689 / SK2), this protein is 3-hydroxydecanoyl-[acyl-carrier-protein] dehydratase.